A 692-amino-acid chain; its full sequence is Polyphosphate kinase (692 aa).

Asn-57 lines the ATP pocket. Positions 383 and 413 each coordinate Mg(2+). Residue His-443 is the Phosphohistidine intermediate of the active site. Residues Tyr-476, Arg-572, and His-600 each coordinate ATP.

The protein belongs to the polyphosphate kinase 1 (PPK1) family. It depends on Mg(2+) as a cofactor. An intermediate of this reaction is the autophosphorylated ppk in which a phosphate is covalently linked to a histidine residue through a N-P bond.

It catalyses the reaction [phosphate](n) + ATP = [phosphate](n+1) + ADP. Its function is as follows. Catalyzes the reversible transfer of the terminal phosphate of ATP to form a long-chain polyphosphate (polyP). In Acinetobacter baumannii (strain AYE), this protein is Polyphosphate kinase.